Consider the following 779-residue polypeptide: Ribonucleoside-diphosphate reductase large subunit (779 aa).

Residues Ser178, 193 to 194 (SC), Gly222, 420 to 424 (NLCIE), and 614 to 618 (PTATS) each bind substrate. Cys194 and Cys440 are joined by a disulfide. The active-site Proton acceptor is Asn420. Cys422 (cysteine radical intermediate) is an active-site residue. The active-site Proton acceptor is the Glu424.

Belongs to the ribonucleoside diphosphate reductase large chain family. As to quaternary structure, heterotetramer composed of a homodimer of the large subunit (R1) and a homodimer of the small subunit (R2). Larger multisubunit protein complex are also active, composed of (R1)n(R2)n.

The catalysed reaction is a 2'-deoxyribonucleoside 5'-diphosphate + [thioredoxin]-disulfide + H2O = a ribonucleoside 5'-diphosphate + [thioredoxin]-dithiol. Its activity is regulated as follows. Under complex allosteric control mediated by deoxynucleoside triphosphates and ATP binding. The type of nucleotide bound at the specificity site determines substrate preference. It seems probable that ATP makes the enzyme reduce CDP and UDP, dGTP favors ADP reduction and dTTP favors GDP reduction. Functionally, ribonucleoside-diphosphate reductase holoenzyme provides the precursors necessary for viral DNA synthesis. Allows virus growth in non-dividing cells. Catalyzes the biosynthesis of deoxyribonucleotides from the corresponding ribonucleotides. The protein is Ribonucleoside-diphosphate reductase large subunit of Ornithodoros (relapsing fever ticks).